An 81-amino-acid chain; its full sequence is UPF0180 protein BLi01634/BL05144 (81 aa).

Belongs to the UPF0180 family.

The protein is UPF0180 protein BLi01634/BL05144 of Bacillus licheniformis (strain ATCC 14580 / DSM 13 / JCM 2505 / CCUG 7422 / NBRC 12200 / NCIMB 9375 / NCTC 10341 / NRRL NRS-1264 / Gibson 46).